A 209-amino-acid chain; its full sequence is Thymidylate kinase (209 aa).

10–17 lines the ATP pocket; the sequence is GIDGCGKT.

Belongs to the thymidylate kinase family.

It carries out the reaction dTMP + ATP = dTDP + ADP. In terms of biological role, phosphorylation of dTMP to form dTDP in both de novo and salvage pathways of dTTP synthesis. The protein is Thymidylate kinase of Synechococcus sp. (strain CC9605).